We begin with the raw amino-acid sequence, 326 residues long: GATA zinc finger domain-containing protein 21 (326 aa).

2 disordered regions span residues Met-1–Asn-102 and Gln-145–Arg-238. Low complexity-rich tracts occupy residues Asn-17–Asn-102 and Ser-148–Ala-164. The span at Leu-165–Gln-189 shows a compositional bias: polar residues. Over residues Asp-193 to Ser-218 the composition is skewed to acidic residues. Residues Cys-239–Cys-266 form a GATA-type zinc finger. A disordered region spans residues Ile-277 to Glu-326. Acidic residues predominate over residues Gln-294 to Glu-326.

This chain is GATA zinc finger domain-containing protein 21 (gtaU), found in Dictyostelium discoideum (Social amoeba).